Reading from the N-terminus, the 369-residue chain is Anhydro-N-acetylmuramic acid kinase (369 aa).

12-19 (GTSLDGVD) lines the ATP pocket.

The protein belongs to the anhydro-N-acetylmuramic acid kinase family.

It carries out the reaction 1,6-anhydro-N-acetyl-beta-muramate + ATP + H2O = N-acetyl-D-muramate 6-phosphate + ADP + H(+). It participates in amino-sugar metabolism; 1,6-anhydro-N-acetylmuramate degradation. Its pathway is cell wall biogenesis; peptidoglycan recycling. Its function is as follows. Catalyzes the specific phosphorylation of 1,6-anhydro-N-acetylmuramic acid (anhMurNAc) with the simultaneous cleavage of the 1,6-anhydro ring, generating MurNAc-6-P. Is required for the utilization of anhMurNAc either imported from the medium or derived from its own cell wall murein, and thus plays a role in cell wall recycling. The sequence is that of Anhydro-N-acetylmuramic acid kinase from Escherichia coli O157:H7.